Consider the following 215-residue polypeptide: MKILVTGFDPFGDDKINPAIEAVKRLPDEIAGAQIVKLEIPTKFNVSADVVKDAIAKEKPDYVLSIGQAGGRFELTPERVAINLDDGRIQDNAGYQPLNHTIHGDGENAYFTQLPIKAMAKAIREAGVPAAVSNTAGTYVCNHIFYQVQYMRDKMFPDIKAGFMHIPFLPEQVVTRPETPALSLDDDVLGITAAIRAIVSRDGKGDIETIEGKNH.

Active-site residues include Glu-78, Cys-141, and His-165.

It belongs to the peptidase C15 family. Homotetramer.

It is found in the cytoplasm. The catalysed reaction is Release of an N-terminal pyroglutamyl group from a polypeptide, the second amino acid generally not being Pro.. Removes 5-oxoproline from various penultimate amino acid residues except L-proline. The chain is Pyrrolidone-carboxylate peptidase from Lacticaseibacillus paracasei (strain ATCC 334 / BCRC 17002 / CCUG 31169 / CIP 107868 / KCTC 3260 / NRRL B-441) (Lactobacillus paracasei).